Consider the following 360-residue polypeptide: Abhydrolase domain-containing protein lid-1 (360 aa).

Residues 73 to 203 (AIVFIPGLGA…MSFLGGVAGY (131 aa)) enclose the AB hydrolase-1 domain.

This sequence belongs to the peptidase S33 family. ABHD4/ABHD5 subfamily. As to quaternary structure, interacts with atgl-1.

It is found in the lipid droplet. In terms of biological role, acts coordinately with atgl-1 within the lipolytic cascade to distribute stored energy to tissues during nutritional deprivation. This is Abhydrolase domain-containing protein lid-1 from Caenorhabditis elegans.